Reading from the N-terminus, the 166-residue chain is Phospholipase A2 inhibitor B1 (166 aa).

The signal sequence occupies residues 1 to 19 (MRLILLSGLLLLGTFLVNG). The C-type lectin domain occupies 46–161 (LFHAFLTVHK…CDDNLLVVCE (116 aa)). 2 disulfide bridges follow: Cys-83/Cys-160 and Cys-138/Cys-152. N-linked (GlcNAc...) asparagine glycosylation occurs at Asn-122.

This sequence belongs to the alpha-type phospholipase A2 inhibitor family. As to quaternary structure, homotrimer; non-covalently linked. As to expression, expressed by the liver.

It is found in the secreted. Functionally, this phospholipase A2 inhibitor binds directly phospholipase A2 in the presence or absence of calcium. The polypeptide is Phospholipase A2 inhibitor B1 (Crotalus durissus terrificus (South American rattlesnake)).